A 341-amino-acid chain; its full sequence is Very-long-chain 3-oxoacyl-CoA reductase (341 aa).

Residues 22-42 form a helical membrane-spanning segment; it reads AIYGFLLAGVAAFAAPIVSTI. The NADP(+) site is built by leucine 67, aspartate 123, aspartate 131, asparagine 150, tyrosine 217, lysine 221, isoleucine 250, and threonine 252. Tyrosine 217 acts as the Proton donor in catalysis. Catalysis depends on lysine 221, which acts as the Lowers pKa of active site Tyr.

Belongs to the short-chain dehydrogenases/reductases (SDR) family.

Its subcellular location is the endoplasmic reticulum membrane. The catalysed reaction is a very-long-chain (3R)-3-hydroxyacyl-CoA + NADP(+) = a very-long-chain 3-oxoacyl-CoA + NADPH + H(+). It participates in lipid metabolism; fatty acid biosynthesis. Its function is as follows. Component of the microsomal membrane bound fatty acid elongation system, which produces the 26-carbon very long-chain fatty acids (VLCFA) from palmitate. Catalyzes the reduction of the 3-ketoacyl-CoA intermediate that is formed in each cycle of fatty acid elongation. VLCFAs serve as precursors for ceramide and sphingolipids. The polypeptide is Very-long-chain 3-oxoacyl-CoA reductase (Phaeosphaeria nodorum (strain SN15 / ATCC MYA-4574 / FGSC 10173) (Glume blotch fungus)).